The following is a 485-amino-acid chain: MAYKGWNSDSFSMNSELFNEILLYAHLDSSGIDSDDLNTNPNTLENEINSVEKTLNIEELKKITTALNIDNRCNICSIINICLRHETDKMWIYDYALLCYKCNAAPRTPLAVVIIATEFMQLIQKHFLNINFDGLFLNNILSILDFHVHFFINRCFSNTNDDLLHNENITLYHMAILKSLLLEDESIPNIRIKKFKLKGKPTKKQHGNAILEKQTLPLNTHFTHLIFYMWAGTNIFDRISLTDLAIKKRQILKAIYSTKNELNCSAGPILLSQIPISITKNATSSVCLLCELMTSSQKNFDLLQFIYTSVINYCQNNLKMIDRIQFVLANLLDLARIYTNVKTTSDCSKIVLANEQEFSNSDFVIDCHSFLILKQVGPVGLYKHFFCDPLCIANIKTIKPHILFYTTESCILQDFKVAICYQNEYLNSVEKHVWLAIHFFKAFQVSKLNHKNKTLISDFLKDFTQLLADQNFEIVDPTFTIHYYV.

Zn(2+) is bound by residues Cys-73, Cys-76, His-149, Cys-155, Cys-287, Cys-290, His-384, and Cys-391. Zinc finger stretches follow at residues Cys-73–Cys-155 and Cys-287–Cys-391.

Belongs to the herpesviridae UL32 protein family.

The protein resides in the host cytoplasm. It is found in the host nucleus. Functionally, plays a role in efficient localization of neo-synthesized capsids to nuclear replication compartments, thereby controlling cleavage and packaging of virus genomic DNA. The polypeptide is Packaging protein UL32 (U36) (Human herpesvirus 7 (strain JI) (HHV-7)).